Here is a 379-residue protein sequence, read N- to C-terminus: Queuine tRNA-ribosyltransferase (379 aa).

Asp94 functions as the Proton acceptor in the catalytic mechanism. Substrate-binding positions include 94-98, Asp148, Gln191, and Gly218; that span reads DSGGF. Residues 249-255 form an RNA binding region; that stretch reads GVGSPDS. The active-site Nucleophile is the Asp268. Residues 273-277 form an RNA binding; important for wobble base 34 recognition region; the sequence is TRIAR. Residues Cys306, Cys308, Cys311, and His337 each coordinate Zn(2+).

Belongs to the queuine tRNA-ribosyltransferase family. In terms of assembly, homodimer. Within each dimer, one monomer is responsible for RNA recognition and catalysis, while the other monomer binds to the replacement base PreQ1. The cofactor is Zn(2+).

It carries out the reaction 7-aminomethyl-7-carbaguanine + guanosine(34) in tRNA = 7-aminomethyl-7-carbaguanosine(34) in tRNA + guanine. It participates in tRNA modification; tRNA-queuosine biosynthesis. Catalyzes the base-exchange of a guanine (G) residue with the queuine precursor 7-aminomethyl-7-deazaguanine (PreQ1) at position 34 (anticodon wobble position) in tRNAs with GU(N) anticodons (tRNA-Asp, -Asn, -His and -Tyr). Catalysis occurs through a double-displacement mechanism. The nucleophile active site attacks the C1' of nucleotide 34 to detach the guanine base from the RNA, forming a covalent enzyme-RNA intermediate. The proton acceptor active site deprotonates the incoming PreQ1, allowing a nucleophilic attack on the C1' of the ribose to form the product. After dissociation, two additional enzymatic reactions on the tRNA convert PreQ1 to queuine (Q), resulting in the hypermodified nucleoside queuosine (7-(((4,5-cis-dihydroxy-2-cyclopenten-1-yl)amino)methyl)-7-deazaguanosine). The chain is Queuine tRNA-ribosyltransferase from Listeria monocytogenes serotype 4a (strain HCC23).